The following is a 401-amino-acid chain: Sulfate adenylyltransferase (401 aa).

This sequence belongs to the sulfate adenylyltransferase family.

The enzyme catalyses sulfate + ATP + H(+) = adenosine 5'-phosphosulfate + diphosphate. The protein operates within sulfur metabolism; hydrogen sulfide biosynthesis; sulfite from sulfate: step 1/3. This chain is Sulfate adenylyltransferase, found in Alcanivorax borkumensis (strain ATCC 700651 / DSM 11573 / NCIMB 13689 / SK2).